We begin with the raw amino-acid sequence, 329 residues long: Phenylalanine--tRNA ligase alpha subunit (329 aa).

Residue E254 participates in Mg(2+) binding.

This sequence belongs to the class-II aminoacyl-tRNA synthetase family. Phe-tRNA synthetase alpha subunit type 1 subfamily. In terms of assembly, tetramer of two alpha and two beta subunits. Requires Mg(2+) as cofactor.

The protein resides in the cytoplasm. The catalysed reaction is tRNA(Phe) + L-phenylalanine + ATP = L-phenylalanyl-tRNA(Phe) + AMP + diphosphate + H(+). The polypeptide is Phenylalanine--tRNA ligase alpha subunit (Actinobacillus succinogenes (strain ATCC 55618 / DSM 22257 / CCUG 43843 / 130Z)).